The primary structure comprises 192 residues: MSRYLGPRVRVIRRLGALPALTNKSPKKRTIAPGEHAHKTRKLSEFAVQLQEKQKLQYYYGITNSQLARYFRQARRSKSSTGLALLTMLETRLDHLVYRAGFAPTLPAARQLVNHGHVKVNGKKVTIASWACEVNHVIEVKSSSPPKPPEYLPPYLQLSNGTLTVTQPVQKEWLAFVVNELLVVEYYTRVGA.

The S4 RNA-binding domain maps to 91-155; the sequence is TRLDHLVYRA…PKPPEYLPPY (65 aa).

This sequence belongs to the universal ribosomal protein uS4 family. In terms of assembly, part of the 30S ribosomal subunit. Contacts protein S5. The interaction surface between S4 and S5 is involved in control of translational fidelity.

The protein resides in the plastid. Its subcellular location is the chloroplast. Its function is as follows. One of the primary rRNA binding proteins, it binds directly to 16S rRNA where it nucleates assembly of the body of the 30S subunit. With S5 and S12 plays an important role in translational accuracy. This chain is Small ribosomal subunit protein uS4c-2, found in Cyanidium caldarium (Red alga).